The chain runs to 142 residues: Small ribosomal subunit protein uS19 (142 aa).

The residue at position 2 (Ser-2) is an N-acetylserine. Residues Lys-24, Lys-35, and Lys-64 each participate in a glycyl lysine isopeptide (Lys-Gly) (interchain with G-Cter in ubiquitin) cross-link.

It belongs to the universal ribosomal protein uS19 family. As to quaternary structure, component of the small ribosomal subunit (SSU). Mature yeast ribosomes consist of a small (40S) and a large (60S) subunit. The 40S small subunit contains 1 molecule of ribosomal RNA (18S rRNA) and 33 different proteins (encoded by 57 genes). The large 60S subunit contains 3 rRNA molecules (25S, 5.8S and 5S rRNA) and 46 different proteins (encoded by 81 genes).

The protein localises to the cytoplasm. Its function is as follows. Component of the ribosome, a large ribonucleoprotein complex responsible for the synthesis of proteins in the cell. The small ribosomal subunit (SSU) binds messenger RNAs (mRNAs) and translates the encoded message by selecting cognate aminoacyl-transfer RNA (tRNA) molecules. The large subunit (LSU) contains the ribosomal catalytic site termed the peptidyl transferase center (PTC), which catalyzes the formation of peptide bonds, thereby polymerizing the amino acids delivered by tRNAs into a polypeptide chain. The nascent polypeptides leave the ribosome through a tunnel in the LSU and interact with protein factors that function in enzymatic processing, targeting, and the membrane insertion of nascent chains at the exit of the ribosomal tunnel. uS19 is involved in the nuclear export of the small ribosomal subunit precursor. Has a role in the late stage of the assembly of pre-40S particles within the nucleus and controls their export to the cytoplasm. The polypeptide is Small ribosomal subunit protein uS19 (Saccharomyces cerevisiae (strain ATCC 204508 / S288c) (Baker's yeast)).